Consider the following 121-residue polypeptide: Small ribosomal subunit protein uS13 (121 aa).

The interval 94 to 121 (DLPVRGQRTKTNARTRKGPRKSGVQLKK) is disordered. Residues 100 to 121 (QRTKTNARTRKGPRKSGVQLKK) are compositionally biased toward basic residues.

This sequence belongs to the universal ribosomal protein uS13 family. As to quaternary structure, part of the 30S ribosomal subunit. Forms a loose heterodimer with protein S19. Forms two bridges to the 50S subunit in the 70S ribosome.

Located at the top of the head of the 30S subunit, it contacts several helices of the 16S rRNA. In the 70S ribosome it contacts the 23S rRNA (bridge B1a) and protein L5 of the 50S subunit (bridge B1b), connecting the 2 subunits; these bridges are implicated in subunit movement. Contacts the tRNAs in the A and P-sites. This Polynucleobacter necessarius subsp. necessarius (strain STIR1) protein is Small ribosomal subunit protein uS13.